The primary structure comprises 342 residues: D-erythrose-4-phosphate dehydrogenase (342 aa).

12-13 serves as a coordination point for NAD(+); that stretch reads RI. Residues 154-156, R200, 213-214, and R236 each bind substrate; these read SCT and TK. The active-site Nucleophile is C155. Position 318 (N318) interacts with NAD(+).

This sequence belongs to the glyceraldehyde-3-phosphate dehydrogenase family. Epd subfamily. In terms of assembly, homotetramer.

The protein localises to the cytoplasm. The enzyme catalyses D-erythrose 4-phosphate + NAD(+) + H2O = 4-phospho-D-erythronate + NADH + 2 H(+). Its pathway is cofactor biosynthesis; pyridoxine 5'-phosphate biosynthesis; pyridoxine 5'-phosphate from D-erythrose 4-phosphate: step 1/5. In terms of biological role, catalyzes the NAD-dependent conversion of D-erythrose 4-phosphate to 4-phosphoerythronate. This Klebsiella pneumoniae subsp. pneumoniae (strain ATCC 700721 / MGH 78578) protein is D-erythrose-4-phosphate dehydrogenase.